A 467-amino-acid polypeptide reads, in one-letter code: ATP synthase subunit beta (467 aa).

ATP is bound at residue 150 to 157 (GGAGVGKT).

This sequence belongs to the ATPase alpha/beta chains family. F-type ATPases have 2 components, CF(1) - the catalytic core - and CF(0) - the membrane proton channel. CF(1) has five subunits: alpha(3), beta(3), gamma(1), delta(1), epsilon(1). CF(0) has three main subunits: a(1), b(2) and c(9-12). The alpha and beta chains form an alternating ring which encloses part of the gamma chain. CF(1) is attached to CF(0) by a central stalk formed by the gamma and epsilon chains, while a peripheral stalk is formed by the delta and b chains.

Its subcellular location is the cell inner membrane. The catalysed reaction is ATP + H2O + 4 H(+)(in) = ADP + phosphate + 5 H(+)(out). Functionally, produces ATP from ADP in the presence of a proton gradient across the membrane. The catalytic sites are hosted primarily by the beta subunits. This is ATP synthase subunit beta from Aliivibrio fischeri (strain ATCC 700601 / ES114) (Vibrio fischeri).